We begin with the raw amino-acid sequence, 156 residues long: Peptide methionine sulfoxide reductase MsrA (156 aa).

Residue Cys-10 is part of the active site.

The protein belongs to the MsrA Met sulfoxide reductase family.

It catalyses the reaction L-methionyl-[protein] + [thioredoxin]-disulfide + H2O = L-methionyl-(S)-S-oxide-[protein] + [thioredoxin]-dithiol. The enzyme catalyses [thioredoxin]-disulfide + L-methionine + H2O = L-methionine (S)-S-oxide + [thioredoxin]-dithiol. Functionally, has an important function as a repair enzyme for proteins that have been inactivated by oxidation. Catalyzes the reversible oxidation-reduction of methionine sulfoxide in proteins to methionine. The sequence is that of Peptide methionine sulfoxide reductase MsrA from Metamycoplasma arthritidis (strain 158L3-1) (Mycoplasma arthritidis).